Here is a 572-residue protein sequence, read N- to C-terminus: Excitatory amino acid transporter 2 (572 aa).

Residues 1–11 are compositionally biased toward polar residues; that stretch reads MASTEGANNMP. Residues 1–28 are disordered; that stretch reads MASTEGANNMPKQVEVRMHDSHLSSDEP. Residues 1–44 lie on the Cytoplasmic side of the membrane; sequence MASTEGANNMPKQVEVRMHDSHLSSDEPKHRNLGMRMCDKLGKN. Ser3, Ser21, Ser24, and Ser25 each carry phosphoserine. Residues 14–28 are compositionally biased toward basic and acidic residues; that stretch reads VEVRMHDSHLSSDEP. Cys38 carries S-palmitoyl cysteine lipidation. 3 helical membrane-spanning segments follow: residues 45–64, 88–108, and 121–142; these read LLLS…GGLL, MLKM…LSGL, and MVYY…VLAI. N-linked (GlcNAc...) asparagine glycans are attached at residues Asn205 and Asn215. 3 helical membrane-spanning segments follow: residues 235–258, 268–295, and 317–338; these read FKDG…MGKM, FFNI…ACLI, and ITVI…YFVV. Residues 344–374 constitute an intramembrane region (discontinuously helical); the sequence is FSFFAGIFQAWITALGTASSAGTLPVTFRCL. Residue 361–363 coordinates L-aspartate; it reads ASS. A helical membrane pass occupies residues 384-410; the sequence is VTRFVLPVGATINMDGTALYEAVAAIF. 3 residues coordinate Na(+): Gly392, Thr394, and Asn396. Residues Thr400, 441 to 445, Asp474, and Asn481 contribute to the L-aspartate site; that span reads IPSAG. The discontinuously helical intramembrane region spans 424-457; that stretch reads IVTVSLTATLASIGAASIPSAGLVTMLLILTAVG. Residues 471-492 traverse the membrane as a helical segment; sequence WLLDRMRTSVNVVGDSFGAGIV. Positions 481 and 485 each coordinate Na(+). Ser505, Ser520, Ser530, and Ser532 each carry phosphoserine. Residue Tyr537 is modified to Phosphotyrosine. Phosphoserine occurs at positions 542, 558, and 562.

The protein belongs to the dicarboxylate/amino acid:cation symporter (DAACS) (TC 2.A.23) family. SLC1A2 subfamily. As to quaternary structure, homotrimer. Interacts with AJUBA. Glycosylated. In terms of processing, palmitoylation at Cys-38 is not required for correct subcellular localization, but is important for glutamate uptake activity. In terms of tissue distribution, detected in brain. Detected in embryonic forebrain, especially in globus pallidus, perirhinal cortex, lateral hypothalamus, hippocampus, and on fimbria and axonal pathways connecting the neocortex, basal ganglia and thalamus (at protein level). Isoform GLT1 is expressed in the brain. Isoforms GLT-1A and GLT-1B are expressed in the liver.

The protein resides in the cell membrane. The enzyme catalyses K(+)(in) + L-glutamate(out) + 3 Na(+)(out) + H(+)(out) = K(+)(out) + L-glutamate(in) + 3 Na(+)(in) + H(+)(in). It catalyses the reaction K(+)(in) + L-aspartate(out) + 3 Na(+)(out) + H(+)(out) = K(+)(out) + L-aspartate(in) + 3 Na(+)(in) + H(+)(in). The catalysed reaction is D-aspartate(out) + K(+)(in) + 3 Na(+)(out) + H(+)(out) = D-aspartate(in) + K(+)(out) + 3 Na(+)(in) + H(+)(in). Functionally, sodium-dependent, high-affinity amino acid transporter that mediates the uptake of L-glutamate and also L-aspartate and D-aspartate. Functions as a symporter that transports one amino acid molecule together with two or three Na(+) ions and one proton, in parallel with the counter-transport of one K(+) ion. Mediates Cl(-) flux that is not coupled to amino acid transport; this avoids the accumulation of negative charges due to aspartate and Na(+) symport. Essential for the rapid removal of released glutamate from the synaptic cleft, and for terminating the postsynaptic action of glutamate. This is Excitatory amino acid transporter 2 (Slc1a2) from Mus musculus (Mouse).